A 100-amino-acid chain; its full sequence is Large ribosomal subunit protein eL30 (100 aa).

This sequence belongs to the eukaryotic ribosomal protein eL30 family.

This Thermococcus sibiricus (strain DSM 12597 / MM 739) protein is Large ribosomal subunit protein eL30.